The following is a 412-amino-acid chain: Subtilisin-like protease 6 (412 aa).

Residues 1–20 form the signal peptide; sequence MGFITKAIPIVLAALSTVNG. Residues 21-127 constitute a propeptide that is removed on maturation; that stretch reads ARILEAGPHA…VRTTTNGTNL (107 aa). Residues 36-120 form the Inhibitor I9 domain; that stretch reads KYIVVMKKDV…FIEPDFVVRT (85 aa). A Peptidase S8 domain is found at 135 to 412; it reads SWGLARVGSK…SKLIYNGSGK (278 aa). Active-site charge relay system residues include D167 and H198. N-linked (GlcNAc...) asparagine glycans are attached at residues N252 and N264. The active-site Charge relay system is S358. N408 is a glycosylation site (N-linked (GlcNAc...) asparagine).

The protein belongs to the peptidase S8 family.

Its subcellular location is the secreted. Functionally, secreted subtilisin-like serine protease with keratinolytic activity that contributes to pathogenicity. The protein is Subtilisin-like protease 6 (SUB6) of Arthroderma benhamiae (strain ATCC MYA-4681 / CBS 112371) (Trichophyton mentagrophytes).